The chain runs to 554 residues: Germacrene A synthase (554 aa).

4 residues coordinate Mg(2+): aspartate 306, aspartate 310, threonine 453, and glutamate 457. The short motif at 306 to 310 is the DDXXD motif element; the sequence is DDTYD.

It belongs to the terpene synthase family. Requires Mg(2+) as cofactor.

It localises to the cytoplasm. The protein resides in the cytosol. It carries out the reaction (2E,6E)-farnesyl diphosphate = (+)-(R)-germacrene A + diphosphate. It functions in the pathway secondary metabolite biosynthesis; terpenoid biosynthesis. Its function is as follows. Sesquiterpene synthase involved in germacrene A biosynthesis. Also produces additional sesquiterpene products, including 4,5-di-epi-aristolochene, eremophilene, alpha-selinene. This is Germacrene A synthase from Pogostemon cablin (Patchouli).